A 580-amino-acid polypeptide reads, in one-letter code: Trafficking protein particle complex subunit 14 (580 aa).

2 disordered regions span residues 95–134 (GSAGDQDADPPGGGDPGGGGLFRGCSPLLTHGQGPATSGG) and 480–533 (VSHP…RSGS). Residues 105–116 (PGGGDPGGGGLF) show a composition bias toward gly residues. Position 491 is a phosphoserine (Ser-491). Residues 492–502 (RKSSPSSPAVR) show a composition bias toward low complexity. A compositionally biased stretch (polar residues) spans 512–525 (LGRSQSFSHQQPSR). The residue at position 517 (Ser-517) is a Phosphoserine. Thr-541 carries the post-translational modification Phosphothreonine. Ser-546 is subject to Phosphoserine.

As to quaternary structure, component of the multisubunit TRAPP II complex, which includes at least TRAPPC1, TRAPPC2, TRAPPC2L, TRAPPC3, TRAPPC4, TRAPPC5, TRAPPC6A/B, TRAPPC9, TRAPPC10 and TRAPPC14. TRAPPC9, TRAPPC10 and TRAPPC14 are specific subunits of the TRAPP II complex. Interacts with alpha-tubulin during mitosis. Interacts with RAB3IP (via the N-terminal region); this interaction mediates RAB3IP association with the TRAPP II complex. Interacts with TRAPPC10. Interacts with FBF1.

The protein localises to the cytoplasm. Its subcellular location is the cytoskeleton. The protein resides in the spindle. It localises to the vesicle. It is found in the midbody. Its function is as follows. Specific subunit of the TRAPP (transport protein particle) II complex, a highly conserved vesicle tethering complex that functions in late Golgi trafficking as a membrane tether. TRAPPC14 is dispensable for TRAPPII complex integrity but mediates RAB3IP preciliary vesicle trafficking to the mother centriole during ciliogenesis. Modulates YAP1 activity as transcriptional regulator. The chain is Trafficking protein particle complex subunit 14 from Mus musculus (Mouse).